The following is a 378-amino-acid chain: Erythronate-4-phosphate dehydrogenase (378 aa).

The substrate site is built by Ser-45 and Thr-66. Positions 146 and 175 each coordinate NAD(+). Arg-208 is a catalytic residue. Asp-232 is an NAD(+) binding site. The active site involves Glu-237. The active-site Proton donor is His-254. Position 257 (Gly-257) interacts with NAD(+). Residue Tyr-258 coordinates substrate.

It belongs to the D-isomer specific 2-hydroxyacid dehydrogenase family. PdxB subfamily. In terms of assembly, homodimer.

It localises to the cytoplasm. The enzyme catalyses 4-phospho-D-erythronate + NAD(+) = (R)-3-hydroxy-2-oxo-4-phosphooxybutanoate + NADH + H(+). It functions in the pathway cofactor biosynthesis; pyridoxine 5'-phosphate biosynthesis; pyridoxine 5'-phosphate from D-erythrose 4-phosphate: step 2/5. Catalyzes the oxidation of erythronate-4-phosphate to 3-hydroxy-2-oxo-4-phosphonooxybutanoate. This is Erythronate-4-phosphate dehydrogenase from Escherichia coli (strain 55989 / EAEC).